The chain runs to 319 residues: Translocon-associated protein subunit alpha (319 aa).

An N-terminal signal peptide occupies residues 1-21; it reads MRLLPRLLLLFLLAFPAAVLL. Residues 22-208 are Lumenal-facing; that stretch reads RGGPGGSLAV…EREDGLDGET (187 aa). The segment covering 35–76 has biased composition (acidic residues); it reads LTEDEETVEDPIIEDEDDEAEVEEDEPTDLAEEKEEEEDVSS. The segment at 35 to 84 is disordered; it reads LTEDEETVEDPIIEDEDDEAEVEEDEPTDLAEEKEEEEDVSSEPEASPSA. 2 N-linked (GlcNAc...) asparagine glycosylation sites follow: N137 and N192. Residues 209 to 229 form a helical membrane-spanning segment; sequence IFMYMFLAGLGLLVVVGLHQL. At 230 to 319 the chain is on the cytoplasmic side; it reads LESRKRKRPI…SLRQLAVCGI (90 aa). At S248 the chain carries Phosphoserine. At T261 the chain carries Phosphothreonine.

The protein belongs to the TRAP-alpha family. As to quaternary structure, heterotetramer of TRAP-alpha, TRAP-beta, TRAP-delta and TRAP-gamma. Interacts with palmitoylated calnexin (CALX), the interaction is required for efficient folding of glycosylated proteins.

It is found in the endoplasmic reticulum membrane. TRAP proteins are part of a complex whose function is to bind calcium to the ER membrane and thereby regulate the retention of ER resident proteins. May be involved in the recycling of the translocation apparatus after completion of the translocation process or may function as a membrane-bound chaperone facilitating folding of translocated proteins. In Rattus norvegicus (Rat), this protein is Translocon-associated protein subunit alpha (Ssr1).